The following is a 738-amino-acid chain: Prolyl oligopeptidase A (738 aa).

Catalysis depends on charge relay system residues Ser581, Asp665, and His701.

Belongs to the peptidase S9A family. Monomer.

The enzyme catalyses Hydrolysis of Pro-|-Xaa &gt;&gt; Ala-|-Xaa in oligopeptides.. Housekeeping prolyl oligopeptidase (POP) that behaves like a conventional POP by cleaving peptide bonds on the C-terminal side of prolyl residues within peptides that are up to approximately 30 amino acids long. The sequence is that of Prolyl oligopeptidase A from Galerina marginata (strain CBS 339.88).